Consider the following 325-residue polypeptide: 2-oxoglutarate-dependent dioxygenase tropC (325 aa).

A Fe2OG dioxygenase domain is found at 185–287 (PSIPMRLLHY…RYSVAFFLNG (103 aa)). Histidine 210, aspartate 212, and histidine 269 together coordinate Fe cation. Residue arginine 278 participates in 2-oxoglutarate binding.

It belongs to the iron/ascorbate-dependent oxidoreductase family. The cofactor is Fe(2+).

It functions in the pathway secondary metabolite biosynthesis. Functionally, 2-oxoglutarate-dependent dioxygenase; part of the gene cluster that mediates the biosynthesis of the tropolone class of fungal maleic anhydrides. The pathway begins with the synthesis of 3-methylorcinaldehyde by the non-reducing polyketide synthase (PKS) tropA. 3-methylorcinaldehyde is the substrate for the FAD-dependent monooxygenase tropB to yield a dearomatized hydroxycyclohexadione. The 2-oxoglutarate-dependent dioxygenase tropC then performs the oxidative ring expansion to provide the first tropolone metabolite stipitaldehyde. Trop D converts stipitaldehyde into stipitacetal which is in turn converted to stipitalide by the short-chain dehydrogenase/reductase tropE. The next steps involve tropF, tropG, tropH, tropI and tropJ to form successive tropolone maleic anhydrides including stipitaldehydic, stipitatonic and stipitatic acids. The sequence is that of 2-oxoglutarate-dependent dioxygenase tropC from Talaromyces stipitatus (strain ATCC 10500 / CBS 375.48 / QM 6759 / NRRL 1006) (Penicillium stipitatum).